The chain runs to 365 residues: Peptide chain release factor 2 (365 aa).

The residue at position 252 (glutamine 252) is an N5-methylglutamine.

This sequence belongs to the prokaryotic/mitochondrial release factor family. In terms of processing, methylated by PrmC. Methylation increases the termination efficiency of RF2.

It is found in the cytoplasm. Peptide chain release factor 2 directs the termination of translation in response to the peptide chain termination codons UGA and UAA. This Pasteurella multocida (strain Pm70) protein is Peptide chain release factor 2.